Consider the following 665-residue polypeptide: Succinate dehydrogenase [ubiquinone] flavoprotein subunit B, mitochondrial (665 aa).

Residues 1-45 (MALLKVAPSRLLSRALQLTSTLQNCTATSIAARRNFHFTVYGRKD) constitute a mitochondrion transit peptide. FAD contacts are provided by A72, A75, T94, K95, and S101. A Tele-8alpha-FAD histidine modification is found at H102. FAD-binding residues include T103, G108, A224, and D278. H299, R343, and H410 together coordinate oxaloacetate. R343 (proton acceptor) is an active-site residue. E443 contacts FAD. Positions 454 and 457 each coordinate oxaloacetate. Residues S459 and L460 each coordinate FAD.

Belongs to the FAD-dependent oxidoreductase 2 family. FRD/SDH subfamily. As to quaternary structure, component of complex II composed of four subunits: a flavoprotein (FP), an iron-sulfur protein (IP), and a cytochrome b composed of a large and a small subunit. FAD serves as cofactor.

The protein localises to the mitochondrion inner membrane. It catalyses the reaction a ubiquinone + succinate = a ubiquinol + fumarate. The catalysed reaction is (R)-malate + a quinone = enol-oxaloacetate + a quinol. It carries out the reaction (S)-malate + a quinone = enol-oxaloacetate + a quinol. It functions in the pathway carbohydrate metabolism; tricarboxylic acid cycle; fumarate from succinate (eukaryal route): step 1/1. Its activity is regulated as follows. Enol-oxaloacetate inhibits the succinate dehydrogenase activity. Its function is as follows. Flavoprotein (FP) subunit of succinate dehydrogenase (SDH) that is involved in complex II of the mitochondrial electron transport chain and is responsible for transferring electrons from succinate to ubiquinone (coenzyme Q). SDH also oxidizes malate to the non-canonical enol form of oxaloacetate, enol-oxaloacetate. Enol-oxaloacetate, which is a potent inhibitor of the succinate dehydrogenase activity, is further isomerized into keto-oxaloacetate. This chain is Succinate dehydrogenase [ubiquinone] flavoprotein subunit B, mitochondrial (sdha-b), found in Xenopus laevis (African clawed frog).